Reading from the N-terminus, the 356-residue chain is Homoserine O-acetyltransferase (356 aa).

Positions 50 to 335 (NVILVCHALT…DEPYGHDAFL (286 aa)) constitute an AB hydrolase-1 domain. The active-site Nucleophile is Ser-146. Arg-215 lines the substrate pocket. Active-site residues include Asp-302 and His-331. Residue Asp-332 coordinates substrate.

The protein belongs to the AB hydrolase superfamily. MetX family. In terms of assembly, homodimer.

Its subcellular location is the cytoplasm. It catalyses the reaction L-homoserine + acetyl-CoA = O-acetyl-L-homoserine + CoA. The protein operates within amino-acid biosynthesis; L-methionine biosynthesis via de novo pathway; O-acetyl-L-homoserine from L-homoserine: step 1/1. In terms of biological role, transfers an acetyl group from acetyl-CoA to L-homoserine, forming acetyl-L-homoserine. This is Homoserine O-acetyltransferase from Chlorobaculum tepidum (strain ATCC 49652 / DSM 12025 / NBRC 103806 / TLS) (Chlorobium tepidum).